Consider the following 212-residue polypeptide: Translation initiation factor IF-3 (212 aa).

Belongs to the IF-3 family. Monomer.

It localises to the cytoplasm. Functionally, IF-3 binds to the 30S ribosomal subunit and shifts the equilibrium between 70S ribosomes and their 50S and 30S subunits in favor of the free subunits, thus enhancing the availability of 30S subunits on which protein synthesis initiation begins. The polypeptide is Translation initiation factor IF-3 (Synechococcus sp. (strain CC9311)).